The primary structure comprises 324 residues: Probable RuBisCO transcriptional regulator (324 aa).

Residues 8-65 (FSLEQLRILKAIATEGSFKKAAESLYMTQPAISLQIQTLEKKLNIALFDRSGRRALMT) form the HTH lysR-type domain. A DNA-binding region (H-T-H motif) is located at residues 25–44 (FKKAAESLYMTQPAISLQIQ).

The protein belongs to the LysR transcriptional regulatory family.

The protein localises to the plastid. It is found in the cyanelle. Trans-acting transcriptional regulator of RuBisCO genes (rbcL and rbcS) expression. This is Probable RuBisCO transcriptional regulator (rbcR) from Cyanophora paradoxa.